We begin with the raw amino-acid sequence, 168 residues long: Large ribosomal subunit protein uL10 (168 aa).

The protein belongs to the universal ribosomal protein uL10 family. Part of the ribosomal stalk of the 50S ribosomal subunit. The N-terminus interacts with L11 and the large rRNA to form the base of the stalk. The C-terminus forms an elongated spine to which L12 dimers bind in a sequential fashion forming a multimeric L10(L12)X complex.

Functionally, forms part of the ribosomal stalk, playing a central role in the interaction of the ribosome with GTP-bound translation factors. The protein is Large ribosomal subunit protein uL10 of Ralstonia pickettii (strain 12J).